The following is a 358-amino-acid chain: Hsp70/Hsp90 co-chaperone cns1 (358 aa).

4 TPR repeats span residues 64–97 (AQNF…KCGD), 102–135 (IACY…DSTH), 136–169 (AKAY…HPND), and 221–255 (TEHP…YPLV).

It belongs to the TTC4 family. As to quaternary structure, monomer. Component of Hsp70 and Hsp90 chaperone complexes.

It localises to the cytoplasm. Its subcellular location is the nucleus. Functionally, co-chaperone that binds to the molecular chaperones Hsp90 and Hsp70. Stimulates Hsp70 ATPase activity, but not Hsp90 ATPase activity. Involved in only a subset of Hsp90 functions. This Schizosaccharomyces pombe (strain 972 / ATCC 24843) (Fission yeast) protein is Hsp70/Hsp90 co-chaperone cns1 (cns1).